The primary structure comprises 211 residues: Mitotic spindle assembly checkpoint protein MAD2B (211 aa).

Positions 13–203 constitute an HORMA domain; that stretch reads QVVADVLSEF…SDILKMQLYV (191 aa). The segment at 21–155 is mediates interaction with REV1 and REV3L and homodimerization; the sequence is EFLEVAVHLI…FTVLVHTREA (135 aa).

Homooligomer. Heterodimer with REV3L. This dimer forms the minimal DNA polymerase zeta complex (Pol-zeta2), with REV3L bearing DNA polymerase catalytic activity, although its activity is very low in this context. Component of the tetrameric Pol-zeta complex (Pol-zeta4), which consists of REV3L, MAD2L2, POLD2 and POLD3; Pol-zeta4 is the fully active form of DNA polymerase zeta. Component of the shieldin complex, consisting of SHLD1, SHLD2, SHLD3 and MAD2L2/REV7. Within the complex, SHLD2 forms a scaffold which interacts with a SHLD3-MAD2L2 subcomplex via its N-terminus, and with SHLD1 via its C-terminus. Interacts with REV1. Interacts with ADAM9. Interacts with CHAMP1. Interacts with FZR1 (in complex with the anaphase promoting complex APC). May interact with CDC20. Interacts with RAN. Interacts with ELK1; the interaction is direct and recruits MAD2L2 to ELK1-specific promoters. May interact with the JNK kinases MAPK8 and/or MAPK9 to stimulate ELK1 phosphorylation and transcriptional activity upon DNA damage. Interacts with TCF7L2; prevents its binding to promoters and negatively modulates its transcriptional activity. Interacts with YY1AP1. Interacts with PRCC; the interaction is direct. Interacts with POGZ. Interacts with ASTE1.

It localises to the nucleus. It is found in the cytoplasm. Its subcellular location is the cytoskeleton. The protein localises to the spindle. In terms of biological role, adapter protein able to interact with different proteins and involved in different biological processes. Mediates the interaction between the error-prone DNA polymerase zeta catalytic subunit REV3L and the inserter polymerase REV1, thereby mediating the second polymerase switching in translesion DNA synthesis. Translesion DNA synthesis releases the replication blockade of replicative polymerases, stalled in presence of DNA lesions. Component of the shieldin complex, which plays an important role in repair of DNA double-stranded breaks (DSBs). During G1 and S phase of the cell cycle, the complex functions downstream of TP53BP1 to promote non-homologous end joining (NHEJ) and suppress DNA end resection. Mediates various NHEJ-dependent processes including immunoglobulin class-switch recombination, and fusion of unprotected telomeres. May also regulate another aspect of cellular response to DNA damage through regulation of the JNK-mediated phosphorylation and activation of the transcriptional activator ELK1. Inhibits the FZR1- and probably CDC20-mediated activation of the anaphase promoting complex APC thereby regulating progression through the cell cycle. Regulates TCF7L2-mediated gene transcription and may play a role in epithelial-mesenchymal transdifferentiation. The sequence is that of Mitotic spindle assembly checkpoint protein MAD2B (Mad2l2) from Rattus norvegicus (Rat).